Consider the following 357-residue polypeptide: Protein-glutamate methylesterase/protein-glutamine glutaminase (357 aa).

A Response regulatory domain is found at 3 to 120; that stretch reads RVLVVDDSAF…SIDLYKVRDM (118 aa). D54 is subject to 4-aspartylphosphate. A CheB-type methylesterase domain is found at 161–355; that stretch reads FRAGKQLICI…AAIMTYMKKE (195 aa). Catalysis depends on residues S173, H200, and D296.

It belongs to the CheB family. Post-translationally, phosphorylated by CheA. Phosphorylation of the N-terminal regulatory domain activates the methylesterase activity.

Its subcellular location is the cytoplasm. The enzyme catalyses [protein]-L-glutamate 5-O-methyl ester + H2O = L-glutamyl-[protein] + methanol + H(+). The catalysed reaction is L-glutaminyl-[protein] + H2O = L-glutamyl-[protein] + NH4(+). Its function is as follows. Involved in chemotaxis. Part of a chemotaxis signal transduction system that modulates chemotaxis in response to various stimuli. Catalyzes the demethylation of specific methylglutamate residues introduced into the chemoreceptors (methyl-accepting chemotaxis proteins or MCP) by CheR. Also mediates the irreversible deamidation of specific glutamine residues to glutamic acid. The polypeptide is Protein-glutamate methylesterase/protein-glutamine glutaminase (Bacillus licheniformis (strain ATCC 14580 / DSM 13 / JCM 2505 / CCUG 7422 / NBRC 12200 / NCIMB 9375 / NCTC 10341 / NRRL NRS-1264 / Gibson 46)).